The chain runs to 201 residues: Endoribonuclease YbeY (201 aa).

His-156, His-160, and His-166 together coordinate Zn(2+).

The protein belongs to the endoribonuclease YbeY family. It depends on Zn(2+) as a cofactor.

The protein localises to the cytoplasm. In terms of biological role, single strand-specific metallo-endoribonuclease involved in late-stage 70S ribosome quality control and in maturation of the 3' terminus of the 16S rRNA. The chain is Endoribonuclease YbeY from Cupriavidus pinatubonensis (strain JMP 134 / LMG 1197) (Cupriavidus necator (strain JMP 134)).